A 529-amino-acid chain; its full sequence is Bifunctional purine biosynthesis protein PurH (529 aa).

The region spanning 1–148 is the MGS-like domain; the sequence is MQQRRPIRRA…KNHKDVAIVV (148 aa).

It belongs to the PurH family.

The catalysed reaction is (6R)-10-formyltetrahydrofolate + 5-amino-1-(5-phospho-beta-D-ribosyl)imidazole-4-carboxamide = 5-formamido-1-(5-phospho-D-ribosyl)imidazole-4-carboxamide + (6S)-5,6,7,8-tetrahydrofolate. The enzyme catalyses IMP + H2O = 5-formamido-1-(5-phospho-D-ribosyl)imidazole-4-carboxamide. It participates in purine metabolism; IMP biosynthesis via de novo pathway; 5-formamido-1-(5-phospho-D-ribosyl)imidazole-4-carboxamide from 5-amino-1-(5-phospho-D-ribosyl)imidazole-4-carboxamide (10-formyl THF route): step 1/1. Its pathway is purine metabolism; IMP biosynthesis via de novo pathway; IMP from 5-formamido-1-(5-phospho-D-ribosyl)imidazole-4-carboxamide: step 1/1. The chain is Bifunctional purine biosynthesis protein PurH from Pectobacterium carotovorum subsp. carotovorum (strain PC1).